We begin with the raw amino-acid sequence, 84 residues long: U8-theraphotoxin-Hhn1a (84 aa).

Residues 1–21 (MKVVLLECLVWMMAMMELVSC) form the signal peptide. Intrachain disulfides connect Cys-23/Cys-35, Cys-29/Cys-44, Cys-34/Cys-67, Cys-54/Cys-75, and Cys-69/Cys-81.

It belongs to the AVIT (prokineticin) family. Expressed by the venom gland.

The protein localises to the secreted. This chain is U8-theraphotoxin-Hhn1a, found in Cyriopagopus hainanus (Chinese bird spider).